Here is a 147-residue protein sequence, read N- to C-terminus: uncharacterized protein (147 aa).

Residues 72–81 (ARAKPASRAP) are compositionally biased toward low complexity. Positions 72–147 (ARAKPASRAP…QGAAGRRLSP (76 aa)) are disordered.

This is an uncharacterized protein from Homo sapiens (Human).